Here is a 362-residue protein sequence, read N- to C-terminus: Phospho-N-acetylmuramoyl-pentapeptide-transferase (362 aa).

10 consecutive transmembrane segments (helical) span residues 18–38 (VFGY…AISL), 73–93 (TMGG…WGDL), 97–117 (YVWV…VDDW), 134–154 (YFWT…SATT), 160–180 (LIVP…FIAL), 200–220 (GLAI…AYVA), 237–257 (AGEL…FLWF), 264–284 (VFMG…IAVV), 289–309 (IVLF…MVQV), and 339–359 (QVVV…LSTL).

The protein belongs to the glycosyltransferase 4 family. MraY subfamily. Mg(2+) is required as a cofactor.

Its subcellular location is the cell inner membrane. The catalysed reaction is UDP-N-acetyl-alpha-D-muramoyl-L-alanyl-gamma-D-glutamyl-meso-2,6-diaminopimeloyl-D-alanyl-D-alanine + di-trans,octa-cis-undecaprenyl phosphate = di-trans,octa-cis-undecaprenyl diphospho-N-acetyl-alpha-D-muramoyl-L-alanyl-D-glutamyl-meso-2,6-diaminopimeloyl-D-alanyl-D-alanine + UMP. It participates in cell wall biogenesis; peptidoglycan biosynthesis. Catalyzes the initial step of the lipid cycle reactions in the biosynthesis of the cell wall peptidoglycan: transfers peptidoglycan precursor phospho-MurNAc-pentapeptide from UDP-MurNAc-pentapeptide onto the lipid carrier undecaprenyl phosphate, yielding undecaprenyl-pyrophosphoryl-MurNAc-pentapeptide, known as lipid I. The polypeptide is Phospho-N-acetylmuramoyl-pentapeptide-transferase (Azoarcus sp. (strain BH72)).